The following is a 206-amino-acid chain: Outer-membrane lipoprotein LolB (206 aa).

The signal sequence occupies residues 1–18; that stretch reads MKTFKFFTALFATAILTA. Residue Cys19 is the site of N-palmitoyl cysteine attachment. The S-diacylglycerol cysteine moiety is linked to residue Cys19.

It belongs to the LolB family. In terms of assembly, monomer.

The protein resides in the cell outer membrane. Its function is as follows. Plays a critical role in the incorporation of lipoproteins in the outer membrane after they are released by the LolA protein. The polypeptide is Outer-membrane lipoprotein LolB (Haemophilus influenzae (strain PittGG)).